We begin with the raw amino-acid sequence, 423 residues long: G protein-activated inward rectifier potassium channel 2 (423 aa).

The Cytoplasmic segment spans residues 1–89 (MAKLTESMTN…IFTTLVDLKW (89 aa)). Serine 16 and serine 23 each carry phosphoserine. The helical transmembrane segment at 90-114 (RFNLLIFVMVYTVTWLFFGMIWWLI) threads the bilayer. Residues 115–138 (AYIRGDMDHIEDPSWTPCVTNLNG) are Extracellular-facing. An intramembrane region (helical; Pore-forming) is located at residues 139-150 (FVSAFLFSIETE). The segment at residues 151-157 (TTIGYGY) is an intramembrane region (pore-forming). The Selectivity filter signature appears at 152 to 157 (TIGYGY). The Extracellular portion of the chain corresponds to 158–166 (RVITDKCPE). The helical transmembrane segment at 167-188 (GIILLLIQSVLGSIVNAFMVGC) threads the bilayer. The Cytoplasmic segment spans residues 189 to 423 (MFVKISQPKK…VANLENESKV (235 aa)). The segment at 390–423 (NQHAELETEEEEKNLEEQTERNGDVANLENESKV) is disordered. The short motif at 420–423 (ESKV) is the PDZ-binding element.

This sequence belongs to the inward rectifier-type potassium channel (TC 1.A.2.1) family. KCNJ6 subfamily. As to quaternary structure, associates with KCNJ3/GIRK1 or KCNJ5/GRIK4 to form a G-protein-activated heteromultimer pore-forming unit. The resulting inward current is much larger. Interacts (via PDZ-binding motif) with SNX27 (via PDZ domain); the interaction is required when endocytosed to prevent degradation in lysosomes and promote recycling to the plasma membrane. As to expression, most abundant in cerebellum, and to a lesser degree in islets and exocrine pancreas.

Its subcellular location is the membrane. The catalysed reaction is K(+)(in) = K(+)(out). Its activity is regulated as follows. Activated by phosphatidylinositol 4,5 biphosphate (PtdIns(4,5)P2). In terms of biological role, inward rectifier potassium channels are characterized by a greater tendency to allow potassium to flow into the cell rather than out of it. Their voltage dependence is regulated by the concentration of extracellular potassium; as external potassium is raised, the voltage range of the channel opening shifts to more positive voltages. The inward rectification is mainly due to the blockage of outward current by internal magnesium. This potassium channel may be involved in the regulation of insulin secretion by glucose and/or neurotransmitters acting through G-protein-coupled receptors. In Homo sapiens (Human), this protein is G protein-activated inward rectifier potassium channel 2 (KCNJ6).